Reading from the N-terminus, the 297-residue chain is Acetyl-coenzyme A carboxylase carboxyl transferase subunit beta (297 aa).

Positions 27–296 constitute a CoA carboxyltransferase N-terminal domain; the sequence is LWHKCPSCEA…PVETSQVTAK (270 aa). Zn(2+) is bound by residues Cys31, Cys34, Cys50, and Cys53. The C4-type zinc finger occupies 31–53; that stretch reads CPSCEAVLYRPELEKTLDVCPKC.

It belongs to the AccD/PCCB family. As to quaternary structure, acetyl-CoA carboxylase is a heterohexamer composed of biotin carboxyl carrier protein (AccB), biotin carboxylase (AccC) and two subunits each of ACCase subunit alpha (AccA) and ACCase subunit beta (AccD). It depends on Zn(2+) as a cofactor.

Its subcellular location is the cytoplasm. It catalyses the reaction N(6)-carboxybiotinyl-L-lysyl-[protein] + acetyl-CoA = N(6)-biotinyl-L-lysyl-[protein] + malonyl-CoA. The protein operates within lipid metabolism; malonyl-CoA biosynthesis; malonyl-CoA from acetyl-CoA: step 1/1. Its function is as follows. Component of the acetyl coenzyme A carboxylase (ACC) complex. Biotin carboxylase (BC) catalyzes the carboxylation of biotin on its carrier protein (BCCP) and then the CO(2) group is transferred by the transcarboxylase to acetyl-CoA to form malonyl-CoA. The polypeptide is Acetyl-coenzyme A carboxylase carboxyl transferase subunit beta (Stutzerimonas stutzeri (strain A1501) (Pseudomonas stutzeri)).